The sequence spans 768 residues: Protein STRUBBELIG (768 aa).

Positions 1–24 (MSFTRWEVFFGLSVLALTMPFSAG) are cleaved as a signal peptide. Residues 25–341 (VTNLRDVSAI…GSGKFWSTQR (317 aa)) lie on the Extracellular side of the membrane. The cysteines at positions 57 and 66 are disulfide-linked. A glycan (N-linked (GlcNAc...) asparagine) is linked at N70. LRR repeat units follow at residues 94–115 (SIQV…ALPS), 116–139 (SIRN…SFLS), 140–162 (DLSE…FQQL), 164–186 (KLTK…MGDL), 188–210 (SLKI…EDLF), and 211–231 (LTDL…NLLK). N119 is a glycosylation site (N-linked (GlcNAc...) asparagine). The disordered stretch occupies residues 241-334 (PFNTSIITPP…ISPPSGSGSG (94 aa)). N243 carries N-linked (GlcNAc...) asparagine glycosylation. 2 stretches are compositionally biased toward pro residues: residues 248-283 (TPPP…PFAP) and 291-301 (QHPPPSPPLVW). Positions 315 to 334 (NSVSGQPTLQISPPSGSGSG) are enriched in polar residues. Residues 342–362 (IILVVSSVAIIVLVSGLCVTL) form a helical membrane-spanning segment. The Cytoplasmic segment spans residues 363-768 (WRCCRSKIYN…EIVQDLQHMI (406 aa)). A disordered region spans residues 385–477 (PYFNKPPSQP…RAAHFPPGLN (93 aa)). Residues 439–464 (SYYNKDVNTPQKPLQQPPRQFQSNDT) are compositionally biased toward polar residues. The 272-residue stretch at 497-768 (FSEENIIGEG…EIVQDLQHMI (272 aa)) folds into the Protein kinase domain. ATP is bound by residues 503-511 (IGEGSIGNV) and K525.

The protein belongs to the protein kinase superfamily. Ser/Thr protein kinase family. Interacts (via intra-cellular domain) with AN; this interaction is not required for correct subcellular localization and recycling of SUB. Binds to QKY and POQ at the plasma membrane. Binds to QKY at plasmodesmata (PD) in root epidermal cells to promote tissue morphogenesis. In terms of tissue distribution, expressed in leaves, stems, inflorescences, flower buds and developing root epidermis.

It is found in the cell membrane. The protein localises to the cell junction. The protein resides in the plasmodesma. Its activity is regulated as follows. Regulated at the post-transcriptional level. In terms of biological role, regulates the expression of transcription factors that define the cell fates. Acts in a non-cell-autonomous fashion, functions in a radial inside-out signaling process, and mediates cell morphogenesis and cell fate across clonally distinct cell layers in floral primordia, developing ovules, and root meristems. Seems to be required for the regulation of cell shape and the orientation of the mitotic division plane. Involved in root hair specification, in the formation of the outer integument and the shape of organs such as carpels and petals and is necessary for the shape and height of the stem. Non-functional SUB proteins are retained in the endoplasmic reticulum and degraded by endoplasmic reticulum-associated degradation (ERAD). Collaboratively with QKY and POQ, regulates cell growth anisotropy during gynoecium development, thus linking together cell-cell communication and cellular growth. Together with QKY, links RLK-dependent signal transduction and intercellular communication mediated by plasmodesmata (PD) to regulate tissue morphogenesis. The polypeptide is Protein STRUBBELIG (Arabidopsis thaliana (Mouse-ear cress)).